A 142-amino-acid chain; its full sequence is MQPRGLLLLLALLLLAAAAEAAKAKKEKMKKEGSECQDWHWGPCIPNSKDCGLGYREGSCGDESRKLKCKIPCNWKKKFGADCKYKFESWGGCSAKTGVKTRSGILKKALYNAECEEVVYVSKPCTAKMKAKAKAKKGKGKD.

The first 21 residues, 1–21 (MQPRGLLLLLALLLLAAAAEA), serve as a signal peptide directing secretion. Cystine bridges form between cysteine 36–cysteine 60, cysteine 44–cysteine 69, cysteine 51–cysteine 73, cysteine 83–cysteine 115, and cysteine 93–cysteine 125.

The protein belongs to the pleiotrophin family.

Its subcellular location is the cell surface. The protein resides in the secreted. It is found in the extracellular space. The protein localises to the extracellular matrix. It localises to the basement membrane. Has mitogenic activity, and neurite extension activity for PC12 cells. The sequence is that of Midkine (RIHB) from Gallus gallus (Chicken).